A 234-amino-acid polypeptide reads, in one-letter code: Opacity protein opA51 (234 aa).

Ala1 is a signal peptide.

Belongs to the opacity porin family.

Its subcellular location is the cell outer membrane. Functionally, implicated in a number of adherence functions. OPA proteins are implicated in pathogenesis and are subject to phase variation. This is Opacity protein opA51 (opaB) from Neisseria gonorrhoeae.